Reading from the N-terminus, the 357-residue chain is Guanine nucleotide-binding protein alpha-16 subunit (357 aa).

Glycine 2 is lipidated: N-myristoyl glycine. A lipid anchor (S-palmitoyl cysteine) is attached at cysteine 3. In terms of domain architecture, G-alpha spans 32–357; that stretch reads RTIKLLLLGA…RDNLRTCGLY (326 aa). Residues 35–48 are G1 motif; sequence KLLLLGAGESGKST. Residues 40-47, 175-181, 200-204, 269-272, and alanine 329 each bind GTP; these read GAGESGKS, LRTRIKT, DVGGQ, and NKKD. Mg(2+) contacts are provided by serine 47 and threonine 181. The segment at 173–181 is G2 motif; that stretch reads DILRTRIKT. The interval 196–205 is G3 motif; that stretch reads FLVFDVGGQR. The interval 265-272 is G4 motif; sequence ILFLNKKD. Positions 327–332 are G5 motif; sequence TCATDT.

This sequence belongs to the G-alpha family. As to quaternary structure, g proteins are composed of 3 units; alpha, beta and gamma. The alpha chain contains the guanine nucleotide binding site.

Functionally, guanine nucleotide-binding proteins (G proteins) are involved as modulators or transducers in various transmembrane signaling systems. In the 1-cell embryo, probably together with goa-1, controls nuclear rotation and spindle elongation during mitosis. During the first embryonic cell divisons, plays a role in gpr-1/2 cortical localization and in the proper orientation of EMS blastomere mitotic spindle. The protein is Guanine nucleotide-binding protein alpha-16 subunit (gpa-16) of Caenorhabditis elegans.